We begin with the raw amino-acid sequence, 436 residues long: Antilisterial bacteriocin subtilosin biosynthesis protein AlbD (436 aa).

A run of 10 helical transmembrane segments spans residues 27–47, 51–71, 112–132, 134–154, 166–186, 187–207, 240–260, 270–290, 315–335, and 395–415; these read IAAG…QAGI, VLGK…MVFL, TLFF…SGAQ, LFWL…GVML, FLLH…MPAV, TIPL…PVFL, AMLL…FQMM, IYIV…LYSI, FYSG…GFIS, and ATLA…LIIV.

It is found in the cell membrane. Its function is as follows. Involved in the production of the bacteriocin subtilosin. Required for immunity to subtilosin. The protein is Antilisterial bacteriocin subtilosin biosynthesis protein AlbD (albD) of Bacillus subtilis.